Consider the following 178-residue polypeptide: Caveolin-1 (178 aa).

The residue at position 2 (serine 2) is an N-acetylserine. Serine 2 is modified (phosphoserine). The segment at 2–94 (SGGKYVDSEG…WKASFTTFTV (93 aa)) is required for homooligomerization. Over 2–104 (SGGKYVDSEG…TKYWFYRLLS (103 aa)) the chain is Cytoplasmic. Lysine 5 is modified (N6-acetyllysine; alternate). Lysine 5 participates in a covalent cross-link: Glycyl lysine isopeptide (Lys-Gly) (interchain with G-Cter in ubiquitin); alternate. At tyrosine 6 the chain carries Phosphotyrosine. Serine 9 is subject to Phosphoserine. Phosphotyrosine; by ABL1 is present on tyrosine 14. Tyrosine 25 is modified (phosphotyrosine). Residues lysine 26 and lysine 30 each participate in a glycyl lysine isopeptide (Lys-Gly) (interchain with G-Cter in ubiquitin) cross-link. Residue serine 37 is modified to Phosphoserine. Glycyl lysine isopeptide (Lys-Gly) (interchain with G-Cter in ubiquitin) cross-links involve residues lysine 39, lysine 47, and lysine 57. Positions 82 to 94 (DGIWKASFTTFTV) are interaction with CAVIN3. Residues 105–125 (ALFGIPMALIWGIYFAILSFL) constitute an intramembrane region (helical). Topologically, residues 126-178 (HIWAVVPCIKSFLIEIQCISRVYSIYVHTFCDPFFEAVGKIFSNIRINMQKET) are cytoplasmic. The segment at 131 to 142 (VPCIKSFLIEIQ) is interacts with SPRY1, SPRY2, SPRY3 and SPRY4. Residues cysteine 133, cysteine 143, and cysteine 156 are each lipidated (S-palmitoyl cysteine). Positions 149–160 (SIYVHTFCDPFF) are interacts with SPRY1, SPRY2, and SPRY4. Residues 167–178 (FSNIRINMQKET) form an interacts with SPRY1, SPRY2, SPRY3 and SPRY4 region.

This sequence belongs to the caveolin family. In terms of assembly, homooligomer. Interacts with BMX, BTK, GLIPR2, NOSTRIN, SNAP25 and STX1A. Interacts with PACSIN2; this interaction induces membrane tubulation. Interacts (via the N-terminus) with DPP4; the interaction is direct. Interacts with SLC7A9. Interacts with CTNNB1, CDH1 and JUP. Interacts with TGFBR1. Interacts with CAVIN3 (via leucine-zipper domain) in a cholesterol-sensitive manner. Interacts with CAVIN1. Interacts with EHD2 in a cholesterol-dependent manner. Forms a ternary complex with UBXN6 and VCP; mediates CAV1 targeting to lysosomes for degradation. Interacts with ABCG1; this interaction regulates ABCG1-mediated cholesterol efflux. Interacts with NEU3; this interaction enhances NEU3 sialidase activity within caveola. Interacts (via C-terminus) with SPRY1, SPRY2 (via C-terminus), SPRY3, and SPRY4. Interacts with IGFBP5; this interaction allows trafficking of IGFBP5 from the plasma membrane to the nucleus. In terms of processing, phosphorylation of isoform Beta on serine residues is constitutive. Phosphorylated at Tyr-14 by ABL1 in response to oxidative stress. Ubiquitinated. Undergo monoubiquitination and multi- and/or polyubiquitination. Monoubiquitination of N-terminal lysines promotes integration in a ternary complex with UBXN6 and VCP which promotes oligomeric CAV1 targeting to lysosomes for degradation. Ubiquitinated by ZNRF1; leading to degradation and modulation of the TLR4-mediated immune response.

The protein resides in the golgi apparatus membrane. It localises to the cell membrane. Its subcellular location is the membrane. The protein localises to the caveola. It is found in the membrane raft. The protein resides in the golgi apparatus. It localises to the trans-Golgi network. Its function is as follows. May act as a scaffolding protein within caveolar membranes. Forms a stable heterooligomeric complex with CAV2 that targets to lipid rafts and drives caveolae formation. Mediates the recruitment of CAVIN proteins (CAVIN1/2/3/4) to the caveolae. Interacts directly with G-protein alpha subunits and can functionally regulate their activity. Involved in the costimulatory signal essential for T-cell receptor (TCR)-mediated T-cell activation. Its binding to DPP4 induces T-cell proliferation and NF-kappa-B activation in a T-cell receptor/CD3-dependent manner. Recruits CTNNB1 to caveolar membranes and may regulate CTNNB1-mediated signaling through the Wnt pathway. Negatively regulates TGFB1-mediated activation of SMAD2/3 by mediating the internalization of TGFBR1 from membrane rafts leading to its subsequent degradation. Binds 20(S)-hydroxycholesterol (20(S)-OHC). In Canis lupus familiaris (Dog), this protein is Caveolin-1 (CAV1).